The primary structure comprises 74 residues: U6-agatoxin-Ao1a (74 aa).

The signal sequence occupies residues 1-19; that stretch reads MRFYIAFFFLLLAADMALS. Positions 20–30 are excised as a propeptide; the sequence is FEIGNSEELER. 3 disulfide bridges follow: Cys44–Cys56, Cys49–Cys61, and Cys55–Cys72.

As to expression, expressed by the venom gland.

The protein resides in the secreted. In Agelena orientalis (Funnel-web spider), this protein is U6-agatoxin-Ao1a.